A 1681-amino-acid polypeptide reads, in one-letter code: Probable clathrin heavy chain 1 (1681 aa).

WD40-like repeat regions lie at residues 22-65, 66-105, 106-147, 148-193, 194-255, 256-299, and 300-328; these read NITF…RPIS, ADSV…NVED, VVYW…QSLA, GTQI…QPIE, GHAA…ADTA, GDFP…ISTD, and TVFV…VSID. CHCR repeat units lie at residues 539–685, 688–830, 835–974, 981–1126, 1130–1271, 1276–1422, and 1425–1568; these read SENG…QVVV, ASKY…SEDA, IINT…QLID, LSET…VKEA, FIKA…FRLA, LHIV…LLLN, and LTVL…YDCF. Basic and acidic residues predominate over residues 1616–1628; the sequence is ERSEHERKEEKAE. The disordered stretch occupies residues 1616-1635; that stretch reads ERSEHERKEEKAEQQQNNGM.

This sequence belongs to the clathrin heavy chain family. Clathrin triskelions, composed of 3 heavy chains and 3 light chains, are the basic subunits of the clathrin coat. May interact with beta arrestin arr-1.

Its subcellular location is the cytoplasmic vesicle membrane. The protein resides in the membrane. It localises to the coated pit. Its function is as follows. Clathrin is the major protein of the polyhedral coat of coated pits and vesicles. May play a role in yolk protein clatherin-mediated endocytosis by oocytes during oogenesis. This chain is Probable clathrin heavy chain 1 (chc-1), found in Caenorhabditis elegans.